The primary structure comprises 398 residues: Odorant receptor 59b (398 aa).

At 1–46 the chain is on the cytoplasmic side; it reads MAVFKLIKPAPLTEKVQSRQGNIYLYRAMWLIGWIPPKEGVLRYVY. The chain crosses the membrane as a helical span at residues 47–67; the sequence is LFWTCVPFAFGVFYLPVGFII. Residues 68–84 lie on the Extracellular side of the membrane; sequence SYVQEFKNFTPGEFLTS. Residues 85–105 traverse the membrane as a helical segment; sequence LQVCINVYGASVKSTITYLFL. Residues 106 to 141 are Cytoplasmic-facing; it reads WRLRKTEILLDSLDKRLANDSDRERIHNMVARCNYA. Residues 142–162 form a helical membrane-spanning segment; it reads FLIYSFIYCGYAGSTFLSYAL. Over 163-179 the chain is Extracellular; the sequence is SGRPPWSVYNPFIDWRD. A helical membrane pass occupies residues 180-200; sequence GMGSLWIQAIFEYITMSFAVL. Residues 201-269 lie on the Cytoplasmic side of the membrane; it reads QDQLSDTYPL…DMIRPMISRT (69 aa). The helical transmembrane segment at 270 to 290 threads the bilayer; that stretch reads IFVQFALIGSVLGLTLVNVFF. The Extracellular portion of the chain corresponds to 291-293; the sequence is FSN. A helical transmembrane segment spans residues 294–314; it reads FWKGVASLLFVITILLQTFPF. Topologically, residues 315 to 348 are cytoplasmic; the sequence is CYTCNMLIDDAQDLSNEIFQSNWVDAEPRYKATL. A helical transmembrane segment spans residues 349 to 369; that stretch reads VLFMHHVQQPIIFIAGGIFPI. The Extracellular portion of the chain corresponds to 370-398; it reads SMNSNITVAKFAFSIITIVRQMNLAEQFQ. N-linked (GlcNAc...) asparagine glycosylation is present at N374.

It belongs to the insect chemoreceptor superfamily. Heteromeric odorant receptor channel (TC 1.A.69) family. Or2a subfamily. Interacts with Orco. Complexes exist early in the endomembrane system in olfactory sensory neurons (OSNs), coupling these complexes to the conserved ciliary trafficking pathway. In terms of tissue distribution, expressed in olfactory sensory neurons in the antenna.

The protein resides in the cell membrane. Functionally, odorant receptor which mediates acceptance or avoidance behavior, depending on its substrates. The odorant receptor repertoire encodes a large collection of odor stimuli that vary widely in identity, intensity, and duration. Forms a complex with Orco to form odorant-sensing units, providing sensitive and prolonged odorant signaling and calcium permeability. Also plays a role in the response to N,N-Diethyl-meta-toluamide (DEET), the most widely used insect repellent worldwide. This is Odorant receptor 59b (Or59b) from Drosophila melanogaster (Fruit fly).